Consider the following 443-residue polypeptide: tRNA modification GTPase MnmE (443 aa).

Residues arginine 23, glutamate 82, and lysine 121 each contribute to the (6S)-5-formyl-5,6,7,8-tetrahydrofolate site. The TrmE-type G domain occupies 215-364 (GTSIVLAGHP…LKQFIQQWMQ (150 aa)). K(+) is bound at residue asparagine 225. Residues 225–230 (NAGKSS), 244–250 (TDIPGTT), and 269–272 (DSAG) each bind GTP. Serine 229 is a Mg(2+) binding site. 3 residues coordinate K(+): threonine 244, isoleucine 246, and threonine 249. Residue threonine 250 coordinates Mg(2+). Position 443 (lysine 443) interacts with (6S)-5-formyl-5,6,7,8-tetrahydrofolate.

It belongs to the TRAFAC class TrmE-Era-EngA-EngB-Septin-like GTPase superfamily. TrmE GTPase family. In terms of assembly, homodimer. Heterotetramer of two MnmE and two MnmG subunits. K(+) is required as a cofactor.

It localises to the cytoplasm. Its function is as follows. Exhibits a very high intrinsic GTPase hydrolysis rate. Involved in the addition of a carboxymethylaminomethyl (cmnm) group at the wobble position (U34) of certain tRNAs, forming tRNA-cmnm(5)s(2)U34. This Chlamydia abortus (strain DSM 27085 / S26/3) (Chlamydophila abortus) protein is tRNA modification GTPase MnmE.